A 293-amino-acid chain; its full sequence is G1/S-specific cyclin-D3 (293 aa).

In terms of domain architecture, Cyclin N-terminal spans valine 27–leucine 152. The tract at residues arginine 257–leucine 293 is disordered. A phosphoserine mark is found at serine 265 and serine 280. Positions proline 271 to threonine 286 are enriched in low complexity. Threonine 284 is subject to Phosphothreonine.

Belongs to the cyclin family. Cyclin D subfamily. As to quaternary structure, interacts with the CDK4 and CDK6 protein kinases to form a serine/threonine kinase holoenzyme complex. The cyclin subunit imparts substrate specificity to the complex. Interacts with ATF5. Interacts with EIF3K. Component of the ternary complex cyclin D/CDK4/CDKN1B required for nuclear translocation and modulation of CDK4-mediated kinase activity. Can form similar complexes with either CDKN1A or CDKN2A. In terms of processing, phosphorylation at Thr-284 by MAP kinases is required for ubiquitination and degradation by the DCX(AMBRA1) complex. Ubiquitinated by the DCX(AMBRA1) complex during the transition from G1 to S cell phase, leading to its degradation: ubiquitination is dependent on Thr-284 phosphorylation. The DCX(AMBRA1) complex represents the major regulator of CCND3 stability during the G1/S transition. Polyubiquitinated by the SCF(FBXL2) complex, leading to proteasomal degradation.

The protein localises to the nucleus. It localises to the cytoplasm. Its function is as follows. Regulatory component of the cyclin D3-CDK4 (DC) complex that phosphorylates and inhibits members of the retinoblastoma (RB) protein family including RB1 and regulates the cell-cycle during G(1)/S transition. Phosphorylation of RB1 allows dissociation of the transcription factor E2F from the RB/E2F complex and the subsequent transcription of E2F target genes which are responsible for the progression through the G(1) phase. Hypophosphorylates RB1 in early G(1) phase. Cyclin D-CDK4 complexes are major integrators of various mitogenenic and antimitogenic signals. Component of the ternary complex, cyclin D3/CDK4/CDKN1B, required for nuclear translocation and activity of the cyclin D-CDK4 complex. Shows transcriptional coactivator activity with ATF5 independently of CDK4. The polypeptide is G1/S-specific cyclin-D3 (Rattus norvegicus (Rat)).